Consider the following 493-residue polypeptide: Alpha-amylase-related protein (493 aa).

A signal peptide spans 1–19 (MFKFATAVILCLAASSTLA). Gln-20 carries the post-translational modification Pyrrolidone carboxylic acid. Cys-47 and Cys-103 are oxidised to a cystine. Ca(2+) contacts are provided by Asn-117, Gln-168, and Asp-177. A disulfide bridge links Cys-156 with Cys-170. Arg-205 provides a ligand contact to chloride. The Nucleophile role is filled by Asp-207. Residue His-211 coordinates Ca(2+). Glu-244 serves as the catalytic Proton donor. 2 residues coordinate chloride: Asn-307 and Arg-342. 3 cysteine pairs are disulfide-bonded: Cys-375-Cys-381, Cys-417-Cys-440, and Cys-447-Cys-459.

This sequence belongs to the glycosyl hydrolase 13 family. In terms of assembly, monomer. Ca(2+) serves as cofactor. The cofactor is chloride.

The protein localises to the secreted. The enzyme catalyses Endohydrolysis of (1-&gt;4)-alpha-D-glucosidic linkages in polysaccharides containing three or more (1-&gt;4)-alpha-linked D-glucose units.. The chain is Alpha-amylase-related protein (Amyrel) from Drosophila ananassae (Fruit fly).